We begin with the raw amino-acid sequence, 103 residues long: Large ribosomal subunit protein bL21 (103 aa).

The protein belongs to the bacterial ribosomal protein bL21 family. As to quaternary structure, part of the 50S ribosomal subunit. Contacts protein L20.

Functionally, this protein binds to 23S rRNA in the presence of protein L20. The sequence is that of Large ribosomal subunit protein bL21 from Clostridium beijerinckii (strain ATCC 51743 / NCIMB 8052) (Clostridium acetobutylicum).